Consider the following 350-residue polypeptide: Protein SGT1 homolog A (350 aa).

TPR repeat units lie at residues 2–35 (AKEL…DPNC), 37–69 (EFFA…DPSL), and 71–103 (KAYL…TPSE). Positions 149–238 (TAKYRHEYYQ…ADIITWASLE (90 aa)) constitute a CS domain. In terms of domain architecture, SGS spans 260–350 (AYPSSKKVKD…DGMELKKWEI (91 aa)).

It belongs to the SGT1 family. In terms of assembly, interacts with RAR1. Forms a ternary complex with RAR1 and barley HSP90.

Functionally, functions in R gene-mediated resistance, but participates in a lower extent than SGT1B to RPP5-mediated resistance. Not required for RPM1, RPS2, RPS4 and RPS5-mediated resistance. Probably required for SCF-mediated ubiquitination, by coupling HSP90 to SCF complex for ubiquitination of HSP90 client proteins. This Arabidopsis thaliana (Mouse-ear cress) protein is Protein SGT1 homolog A (SGT1A).